We begin with the raw amino-acid sequence, 489 residues long: Probable apyrase 1 (489 aa).

Over 1–28 (MRRFSAAAGARQQQQQGEAVSDRVLRFR) the chain is Cytoplasmic. A helical; Signal-anchor for type II membrane protein transmembrane segment spans residues 29–49 (GVLVVVLAPVLLISLVLLLMP). Residues 50-489 (RAPASATVEG…GSAIEVASSS (440 aa)) lie on the Extracellular side of the membrane. 89–99 (VIFDAGSSGSR) provides a ligand contact to ATP. Catalysis depends on glutamate 211, which acts as the Proton acceptor. Residue 235–245 (GVVDLGGGSVQ) coordinates ATP.

The protein belongs to the GDA1/CD39 NTPase family. It depends on Ca(2+) as a cofactor.

The protein resides in the membrane. The catalysed reaction is a ribonucleoside 5'-triphosphate + 2 H2O = a ribonucleoside 5'-phosphate + 2 phosphate + 2 H(+). Functionally, catalyzes the hydrolysis of phosphoanhydride bonds of nucleoside tri- and di-phosphates. The chain is Probable apyrase 1 (APY1) from Oryza sativa subsp. japonica (Rice).